A 215-amino-acid polypeptide reads, in one-letter code: Flavin-dependent thymidylate synthase (215 aa).

The region spanning 1 to 215 (MDVRFISLTK…FPTVAAALEW (215 aa)) is the ThyX domain. FAD is bound by residues S56, 79 to 81 (RHR), and E87. Residues 76–79 (QILR), 87–91 (EFSLR), and R155 each bind dUMP. Residues 79–89 (RHRSFSFQEFS) carry the ThyX motif motif. Position 177 (H177) interacts with FAD. A dUMP-binding site is contributed by R182. Residue R182 is the Involved in ionization of N3 of dUMP, leading to its activation of the active site.

Belongs to the thymidylate synthase ThyX family. In terms of assembly, homotetramer. Requires FAD as cofactor.

It catalyses the reaction dUMP + (6R)-5,10-methylene-5,6,7,8-tetrahydrofolate + NADPH + H(+) = dTMP + (6S)-5,6,7,8-tetrahydrofolate + NADP(+). The protein operates within pyrimidine metabolism; dTTP biosynthesis. Its function is as follows. Catalyzes the reductive methylation of 2'-deoxyuridine-5'-monophosphate (dUMP) to 2'-deoxythymidine-5'-monophosphate (dTMP) while utilizing 5,10-methylenetetrahydrofolate (mTHF) as the methyl donor, and NADPH and FADH(2) as the reductant. The protein is Flavin-dependent thymidylate synthase of Synechocystis sp. (strain ATCC 27184 / PCC 6803 / Kazusa).